The chain runs to 594 residues: Transcription factor TFIIIB component B'' (594 aa).

A disordered region spans residues Met-1–Lys-169. Ser-49 is modified (phosphoserine). Residues Leu-150–Asn-168 are compositionally biased toward polar residues. Ser-178 is modified (phosphoserine). Disordered regions lie at residues Ser-217–Glu-245 and Ala-317–Arg-343. Basic and acidic residues-rich tracts occupy residues Ser-225 to Ala-241 and Ala-317 to Glu-330. One can recognise an SANT domain in the interval Ser-415 to Pro-466. Residues Lys-520–Thr-529 show a composition bias toward basic and acidic residues. 2 disordered regions span residues Lys-520–Met-547 and Leu-567–Gln-594. A compositionally biased stretch (acidic residues) spans Asp-579 to Gln-594.

This sequence belongs to the TFC5 family. TFIIIB comprises the TATA-binding protein (TBP), the B-related factor (BRF) and the B'' component (BDP1). Interacts with TFC4.

It localises to the nucleus. Functionally, general activator of RNA polymerase III transcription. The polypeptide is Transcription factor TFIIIB component B'' (BDP1) (Saccharomyces cerevisiae (strain ATCC 204508 / S288c) (Baker's yeast)).